The chain runs to 524 residues: Portal protein (524 aa).

Residues 486-516 are a coiled coil; that stretch reads AMKDILQMTDEEIEQEAKQIEEESKEARFQD. Basic and acidic residues predominate over residues 500 to 516; the sequence is QEAKQIEEESKEARFQD. A disordered region spans residues 500 to 524; it reads QEAKQIEEESKEARFQDPDQEQEDF.

Belongs to the Tevenvirinae portal protein family. In terms of assembly, homododecamer. Interacts with the large terminase subunit. Interacts with the major capsid protein. Interacts with the capsid vertex protein.

The protein localises to the virion. The protein resides in the host cell inner membrane. In terms of biological role, forms the portal vertex of the capsid. This portal plays critical roles in head assembly, genome packaging, neck/tail attachment, and genome ejection. The portal protein multimerizes as a single ring-shaped homododecamer arranged around a central channel. Binds to the terminase subunits to form the packaging machine. Attaches to the host inner membrane most likely through interaction with host yidC and forms together with chaperone gp40 an initiator complex to form the prohead. This chain is Portal protein (20), found in Enterobacteria phage T4 (Bacteriophage T4).